A 423-amino-acid polypeptide reads, in one-letter code: UPF0229 protein Pmen_4018 (423 aa).

The interval 65 to 108 is disordered; the sequence is HHGRGGKQTIVHPGNKEFTAGERIPRPQGGGGGRGSGKASNSGE.

The protein belongs to the UPF0229 family.

The protein is UPF0229 protein Pmen_4018 of Ectopseudomonas mendocina (strain ymp) (Pseudomonas mendocina).